A 319-amino-acid polypeptide reads, in one-letter code: Taste receptor type 2 member 30 (319 aa).

Position 1 (Met-1) is a topological domain, extracellular. The helical transmembrane segment at 2–22 (ITFLPIIFSILIVVIFVIGNF) threads the bilayer. At 23–46 (ANGFIALVNSIEWVKRQKISFADQ) the chain is on the cytoplasmic side. Residues 47–67 (ILIALAVSRVGLLWALLLHWY) form a helical membrane-spanning segment. Over 68-86 (ATELNLAFYSVEVRITAYN) the chain is Extracellular. Residues 87-107 (VWAVTNHFSNWLATSLSMFYL) form a helical membrane-spanning segment. Residues 108–126 (LKIANFSNLIFLRIKRRVK) lie on the Cytoplasmic side of the membrane. A helical transmembrane segment spans residues 127 to 147 (SVILVILLGPLLFLVCHLFVI). The Extracellular segment spans residues 148-178 (NMNEIVWTKEYEGNLTWKIKLRNAVFLSNMT). Residues Asn-161 and Asn-176 are each glycosylated (N-linked (GlcNAc...) asparagine). Residues 179–199 (LTMLANFVPLTLTLISFLLLI) traverse the membrane as a helical segment. The Cytoplasmic segment spans residues 200 to 229 (CSLCKHLKKMQLHGKGSQDPSTKVHIKALQ). The chain crosses the membrane as a helical span at residues 230-250 (TVTCFLLLCAIYFLSMIISVY). Residues 251 to 259 (NFGRLEKKP) are Extracellular-facing. A helical membrane pass occupies residues 260 to 280 (VFMFCQAITFSYPSTHAFILI). Residues 281 to 319 (WGNKKLKQIFLSVLWHVRYWVKDRSLRLHRFTRAALCKG) lie on the Cytoplasmic side of the membrane.

This sequence belongs to the G-protein coupled receptor T2R family.

It localises to the membrane. In terms of biological role, receptor that may play a role in the perception of bitterness and is gustducin-linked. May play a role in sensing the chemical composition of the gastrointestinal content. The activity of this receptor may stimulate alpha gustducin, mediate PLC-beta-2 activation and lead to the gating of TRPM5. The protein is Taste receptor type 2 member 30 (TAS2R30) of Pongo pygmaeus (Bornean orangutan).